Here is a 412-residue protein sequence, read N- to C-terminus: Divalent metal cation transporter MntH (412 aa).

Topologically, residues 1–19 are cytoplasmic; it reads MTNYRVESSSGRAARKMRL. The chain crosses the membrane as a helical span at residues 20–39; sequence ALMGPAFIAAIGYIDPGNFA. The Periplasmic portion of the chain corresponds to 40 to 51; sequence TNIQAGASFGYQ. A helical membrane pass occupies residues 52-71; the sequence is LLWVVVWANLMAMLIQILSA. The Cytoplasmic segment spans residues 72-95; sequence KLGIATGKNLAEQIRDHYPRPVVW. A helical transmembrane segment spans residues 96-118; the sequence is FYWVQAEIIAMATDLAEFIGAAI. Over 119–125 the chain is Periplasmic; that stretch reads GFKLILG. Residues 126 to 145 traverse the membrane as a helical segment; it reads VSLLQGAVLTGIATFLILML. At 146–155 the chain is on the cytoplasmic side; it reads QRRGQKPLEK. Residues 156–175 form a helical membrane-spanning segment; it reads VIGGLLLFVAAAYIVELIFS. At 176 to 196 the chain is on the periplasmic side; sequence QPNLAQLGKGMVIPSLPTSEA. A helical transmembrane segment spans residues 197–220; the sequence is VFLAAGVLGATIMPHVIYLHSSLT. At 221-238 the chain is on the cytoplasmic side; that stretch reads QHLHGGSRQQRYSATKWD. Residues 239-258 traverse the membrane as a helical segment; sequence VAIAMTIAGFVNLVMMATAA. The Periplasmic portion of the chain corresponds to 259 to 276; it reads AAFHFSGHTGVADLDEAY. The helical transmembrane segment at 277–297 threads the bilayer; the sequence is LTLQPLLSHAAATVFGLSLVA. The Cytoplasmic portion of the chain corresponds to 298–327; that stretch reads AGLSSTVVGTLAGQVVMQGFIRFHIPLWVR. Residues 328 to 344 traverse the membrane as a helical segment; the sequence is RTVTMLPSFIVILMGLD. Residues 345–350 lie on the Periplasmic side of the membrane; it reads PTRILV. The helical transmembrane segment at 351–370 threads the bilayer; it reads MSQVLLSFGIALALVPLLIF. At 371-387 the chain is on the cytoplasmic side; sequence TSDSKLMGDLVNSKRVK. A helical transmembrane segment spans residues 388–406; it reads QTGWVIVVLVVALNIWLLV. The Periplasmic segment spans residues 407 to 412; it reads GTALGL.

This sequence belongs to the NRAMP family.

The protein localises to the cell inner membrane. Its function is as follows. H(+)-stimulated, divalent metal cation uptake system. The protein is Divalent metal cation transporter MntH of Shigella flexneri serotype 5b (strain 8401).